The sequence spans 98 residues: NADH-ubiquinone oxidoreductase chain 4L (98 aa).

3 helical membrane-spanning segments follow: residues 1-21 (MSMVYINIFLAFTMSLMGLLM), 29-49 (SLLCLEGMMLSLFIMMAVAIL), and 61-81 (IILLVFAACEAALGLSLLVMV).

The protein belongs to the complex I subunit 4L family. In terms of assembly, core subunit of respiratory chain NADH dehydrogenase (Complex I) which is composed of 45 different subunits.

It localises to the mitochondrion inner membrane. The catalysed reaction is a ubiquinone + NADH + 5 H(+)(in) = a ubiquinol + NAD(+) + 4 H(+)(out). In terms of biological role, core subunit of the mitochondrial membrane respiratory chain NADH dehydrogenase (Complex I) which catalyzes electron transfer from NADH through the respiratory chain, using ubiquinone as an electron acceptor. Part of the enzyme membrane arm which is embedded in the lipid bilayer and involved in proton translocation. This Puma concolor (Mountain lion) protein is NADH-ubiquinone oxidoreductase chain 4L (MT-ND4L).